The following is a 66-amino-acid chain: Large ribosomal subunit protein bL35 (66 aa).

The segment covering 1–16 has biased composition (basic residues); the sequence is MPKQKTHRASAKRFKR. The interval 1–20 is disordered; sequence MPKQKTHRASAKRFKRTGSG.

It belongs to the bacterial ribosomal protein bL35 family.

The sequence is that of Large ribosomal subunit protein bL35 from Streptococcus thermophilus (strain CNRZ 1066).